The following is a 449-amino-acid chain: Glycoprotein endo-alpha-1,2-mannosidase (449 aa).

Topologically, residues 1–8 (MIRFRRRT) are cytoplasmic. A helical; Signal-anchor for type II membrane protein membrane pass occupies residues 9 to 29 (CITLSIFIFLVCLIMAGLKHL). At 30–449 (RPENAAFGSP…YMKEKEHWLV (420 aa)) the chain is on the lumenal side. Residues 59 to 449 (DSENHLKGNT…YMKEKEHWLV (391 aa)) are catalytic.

Belongs to the glycosyl hydrolase 99 family.

The protein resides in the golgi apparatus membrane. The catalysed reaction is N-{alpha-Glc-(1-&gt;3)-alpha-Man-(1-&gt;2)-alpha-Man-(1-&gt;2)-alpha-Man-(1-&gt;3)-[alpha-Man-(1-&gt;2)-alpha-Man-(1-&gt;3)-[alpha-Man-(1-&gt;2)-alpha-Man-(1-&gt;6)]-alpha-Man-(1-&gt;6)]-beta-Man-(1-&gt;4)-beta-GlcNAc-(1-&gt;4)-beta-GlcNAc}-L-asparaginyl-[protein] + H2O = alpha-D-glucosyl-(1-&gt;3)-D-mannopyranose + N(4)-{alpha-D-Man-(1-&gt;2)-alpha-D-Man-(1-&gt;3)-[alpha-D-Man-(1-&gt;2)-alpha-D-Man-(1-&gt;3)-[alpha-D-Man-(1-&gt;2)-alpha-D-Man-(1-&gt;6)]-alpha-D-Man-(1-&gt;6)]-beta-D-Man-(1-&gt;4)-beta-D-GlaNAc-(1-&gt;4)-beta-D-GlcNAc}-L-asparaginyl-[protein] (N-glucan mannose isomer 8A1,2,3B1,2). This Xenopus laevis (African clawed frog) protein is Glycoprotein endo-alpha-1,2-mannosidase (manea).